The chain runs to 268 residues: tRNA pseudouridine synthase A (268 aa).

The active-site Nucleophile is the aspartate 63. Substrate is bound at residue tyrosine 122.

It belongs to the tRNA pseudouridine synthase TruA family. As to quaternary structure, homodimer.

The catalysed reaction is uridine(38/39/40) in tRNA = pseudouridine(38/39/40) in tRNA. Its function is as follows. Formation of pseudouridine at positions 38, 39 and 40 in the anticodon stem and loop of transfer RNAs. The protein is tRNA pseudouridine synthase A of Treponema denticola (strain ATCC 35405 / DSM 14222 / CIP 103919 / JCM 8153 / KCTC 15104).